The sequence spans 147 residues: Endothelial differentiation-related factor 1 homolog (147 aa).

Positions 1-69 (MAESDWDTVT…KLDRETEELH (69 aa)) are disordered. The span at 33 to 42 (RRGEEVETSK) shows a compositional bias: basic and acidic residues. Over residues 46–58 (AGQNKQHTITRNT) the composition is skewed to polar residues. The segment covering 59 to 69 (AKLDRETEELH) has biased composition (basic and acidic residues). The HTH cro/C1-type domain maps to 81-135 (IQQGRQGKGMTQKDLATKINEKPQVIADYECGKAIPNNQVMGKIERVIGLKLRGK). A DNA-binding region (H-T-H motif) is located at residues 92 to 111 (QKDLATKINEKPQVIADYEC).

The protein resides in the nucleus. In terms of biological role, probable transcriptional coactivator. This chain is Endothelial differentiation-related factor 1 homolog (edf1), found in Xenopus laevis (African clawed frog).